We begin with the raw amino-acid sequence, 357 residues long: Histidinol-phosphate aminotransferase 2 (357 aa).

Lys-216 carries the post-translational modification N6-(pyridoxal phosphate)lysine.

The protein belongs to the class-II pyridoxal-phosphate-dependent aminotransferase family. Histidinol-phosphate aminotransferase subfamily. As to quaternary structure, homodimer. Requires pyridoxal 5'-phosphate as cofactor.

It catalyses the reaction L-histidinol phosphate + 2-oxoglutarate = 3-(imidazol-4-yl)-2-oxopropyl phosphate + L-glutamate. It functions in the pathway amino-acid biosynthesis; L-histidine biosynthesis; L-histidine from 5-phospho-alpha-D-ribose 1-diphosphate: step 7/9. This is Histidinol-phosphate aminotransferase 2 from Idiomarina loihiensis (strain ATCC BAA-735 / DSM 15497 / L2-TR).